Consider the following 498-residue polypeptide: ATP synthase subunit beta, chloroplastic (498 aa).

172–179 (GGAGVGKT) contacts ATP.

Belongs to the ATPase alpha/beta chains family. As to quaternary structure, F-type ATPases have 2 components, CF(1) - the catalytic core - and CF(0) - the membrane proton channel. CF(1) has five subunits: alpha(3), beta(3), gamma(1), delta(1), epsilon(1). CF(0) has four main subunits: a(1), b(1), b'(1) and c(9-12).

The protein resides in the plastid. Its subcellular location is the chloroplast thylakoid membrane. The catalysed reaction is ATP + H2O + 4 H(+)(in) = ADP + phosphate + 5 H(+)(out). In terms of biological role, produces ATP from ADP in the presence of a proton gradient across the membrane. The catalytic sites are hosted primarily by the beta subunits. This Galbulimima belgraveana (Northern pigeonberry ash) protein is ATP synthase subunit beta, chloroplastic.